The chain runs to 621 residues: Chaperone protein HtpG (621 aa).

Residues 1-328 are a; substrate-binding; it reads MIQEKKKFDA…SEDLPLNISR (328 aa). A b region spans residues 329 to 544; the sequence is ESLQHNSVLE…DAAMDIRMER (216 aa). The segment at 475–494 is disordered; that stretch reads SDIDVEQTTSQSEAKNTDSK. A c region spans residues 545-621; the sequence is FLIEQKQIAN…LNDIVQKAIL (77 aa).

It belongs to the heat shock protein 90 family. As to quaternary structure, homodimer.

Its subcellular location is the cytoplasm. Functionally, molecular chaperone. Has ATPase activity. The protein is Chaperone protein HtpG of Rickettsia rickettsii (strain Iowa).